The chain runs to 508 residues: Photosystem II CP47 reaction center protein (508 aa).

6 consecutive transmembrane segments (helical) span residues 21 to 36 (SVHI…WAGS), 101 to 115 (IVFS…IWHW), 140 to 156 (GIHL…FGAF), 203 to 218 (IAAG…FHLS), 237 to 252 (VLSS…AFVV), and 457 to 472 (SFAL…HGAR).

The protein belongs to the PsbB/PsbC family. PsbB subfamily. As to quaternary structure, PSII is composed of 1 copy each of membrane proteins PsbA, PsbB, PsbC, PsbD, PsbE, PsbF, PsbH, PsbI, PsbJ, PsbK, PsbL, PsbM, PsbT, PsbX, PsbY, PsbZ, Psb30/Ycf12, at least 3 peripheral proteins of the oxygen-evolving complex and a large number of cofactors. It forms dimeric complexes. Requires Binds multiple chlorophylls. PSII binds additional chlorophylls, carotenoids and specific lipids. as cofactor.

It is found in the plastid. Its subcellular location is the chloroplast thylakoid membrane. One of the components of the core complex of photosystem II (PSII). It binds chlorophyll and helps catalyze the primary light-induced photochemical processes of PSII. PSII is a light-driven water:plastoquinone oxidoreductase, using light energy to abstract electrons from H(2)O, generating O(2) and a proton gradient subsequently used for ATP formation. In Eucalyptus globulus subsp. globulus (Tasmanian blue gum), this protein is Photosystem II CP47 reaction center protein.